The primary structure comprises 275 residues: Orotidine 5'-phosphate decarboxylase (275 aa).

Lys-95 serves as the catalytic Proton donor.

Belongs to the OMP decarboxylase family. Type 2 subfamily.

The enzyme catalyses orotidine 5'-phosphate + H(+) = UMP + CO2. Its pathway is pyrimidine metabolism; UMP biosynthesis via de novo pathway; UMP from orotate: step 2/2. This chain is Orotidine 5'-phosphate decarboxylase, found in Delftia acidovorans (strain DSM 14801 / SPH-1).